Here is a 554-residue protein sequence, read N- to C-terminus: Membrane protein insertase YidC (554 aa).

A run of 5 helical transmembrane segments spans residues 7–24 (VLWV…DNWQ), 362–382 (FVGN…AVFF), 436–456 (LPVV…LASV), 475–495 (PFFI…SLNP), and 510–530 (PIAF…YYVV).

Belongs to the OXA1/ALB3/YidC family. Type 1 subfamily. Interacts with the Sec translocase complex via SecD. Specifically interacts with transmembrane segments of nascent integral membrane proteins during membrane integration.

It localises to the cell inner membrane. Functionally, required for the insertion and/or proper folding and/or complex formation of integral membrane proteins into the membrane. Involved in integration of membrane proteins that insert both dependently and independently of the Sec translocase complex, as well as at least some lipoproteins. Aids folding of multispanning membrane proteins. The chain is Membrane protein insertase YidC from Burkholderia ambifaria (strain MC40-6).